The following is a 415-amino-acid chain: Zona pellucida-like domain-containing protein 1 (415 aa).

An N-terminal signal peptide occupies residues 1-19 (MERVWLLFLLAIRVSPGSA). At 20 to 373 (QFNSYNCDAN…PFQLNAVTSS (354 aa)) the chain is on the extracellular side. Residues 43–320 (YCGVQAITMK…PICGNRKRRD (278 aa)) enclose the ZP domain. Intrachain disulfides connect Cys44-Cys155 and Cys79-Cys104. A glycan (N-linked (GlcNAc...) asparagine) is linked at Asn164. 2 cysteine pairs are disulfide-bonded: Cys235–Cys296 and Cys255–Cys313. A helical transmembrane segment spans residues 374–394 (LISGMVILGVLCFSLLLCSLA). Topologically, residues 395-415 (LLHRKGSTSLVLNGVRNPVFE) are cytoplasmic.

Post-translationally, proteolytically cleaved before the transmembrane segment to yield the secreted form found in the extracellular matrix of the cupula.

The protein resides in the cytoplasmic vesicle membrane. The protein localises to the secreted. It localises to the extracellular space. Its subcellular location is the extracellular matrix. Functionally, glycoprotein which is a component of the gelatinous extracellular matrix in the cupulae of the vestibular organ. The polypeptide is Zona pellucida-like domain-containing protein 1 (Zpld1) (Mus musculus (Mouse)).